A 494-amino-acid chain; its full sequence is DEAD-box ATP-dependent RNA helicase CshA (494 aa).

Residues 3–31 carry the Q motif motif; sequence ITFQDFNLSSDLMKAINRMGFEEATPIQA. Residues 34–204 form the Helicase ATP-binding domain; it reads IPLGLSNKDV…ERFMTEPEHV (171 aa). 47-54 contributes to the ATP binding site; sequence AQTGTGKT. The DEAD box signature appears at 152–155; the sequence is DEAD. A Helicase C-terminal domain is found at 215–375; sequence NIQQFYLEVQ…RMKEPTLDEA (161 aa). Residues 413–494 form a required for dimerization or oligomerization region; the sequence is VTVVAAAIKM…SGDRRQKKSY (82 aa). The tract at residues 429-494 is disordered; it reads DTPVRLTDEA…SGDRRQKKSY (66 aa). Basic residues predominate over residues 443-452; that stretch reads KRYKNQRSSK. A compositionally biased stretch (basic and acidic residues) spans 473–488; sequence SYDKKRSNDRRSSGDR.

It belongs to the DEAD box helicase family. CshA subfamily. In terms of assembly, homodimer or oligomer. May interact with RNA helicases CshB and DbpA (DeaD). Probably a component of the RNA degradosome complex composed of rny, rnjA, rnjB, pnp, pfkA and eno, and possibly also rnpA (although rnjA and rnjB's presence is unclear). Interacts with ribosomal proteins L1 and L3 (rplA and rplC) and the protein component of RNase RnpA. Interacts with the RNA polymerase core. Mg(2+) serves as cofactor.

Its subcellular location is the cytoplasm. It localises to the nucleoid. The protein localises to the cell membrane. The enzyme catalyses ATP + H2O = ADP + phosphate + H(+). Its activity is regulated as follows. RNA helicase activity is inhibited by EDTA. Functionally, the most abundant DEAD-box RNA helicase. An ATP-dependent RNA helicase with RNA-dependent ATPase activity. May work in conjunction with the cold shock proteins to ensure proper initiation of transcription at low and optimal temperatures. In vitro, unwinds dsRNA in both 5'- and 3'- directions. Plays a role in ribosomal 50S subunit assembly. Its deletion leads to changes in mRNA levels for over 200 transcripts. In Bacillus subtilis (strain 168), this protein is DEAD-box ATP-dependent RNA helicase CshA.